The sequence spans 256 residues: Hydroxyacylglutathione hydrolase (256 aa).

7 residues coordinate Zn(2+): histidine 58, histidine 60, aspartate 62, histidine 63, histidine 116, aspartate 135, and histidine 173.

It belongs to the metallo-beta-lactamase superfamily. Glyoxalase II family. As to quaternary structure, monomer. It depends on Zn(2+) as a cofactor.

It carries out the reaction an S-(2-hydroxyacyl)glutathione + H2O = a 2-hydroxy carboxylate + glutathione + H(+). It participates in secondary metabolite metabolism; methylglyoxal degradation; (R)-lactate from methylglyoxal: step 2/2. Functionally, thiolesterase that catalyzes the hydrolysis of S-D-lactoyl-glutathione to form glutathione and D-lactic acid. This Hyphomonas neptunium (strain ATCC 15444) protein is Hydroxyacylglutathione hydrolase.